The following is a 394-amino-acid chain: Elongation factor Tu (394 aa).

Positions 10–204 constitute a tr-type G domain; sequence KPHVNVGTIG…ALDSYIPEPQ (195 aa). Residues 19–26 form a G1 region; that stretch reads GHVDHGKT. 19-26 lines the GTP pocket; sequence GHVDHGKT. Residue T26 participates in Mg(2+) binding. The segment at 60–64 is G2; that stretch reads GITIN. The tract at residues 81-84 is G3; the sequence is DCPG. Residues 81 to 85 and 136 to 139 each bind GTP; these read DCPGH and NKCD. The interval 136–139 is G4; sequence NKCD. A G5 region spans residues 174-176; that stretch reads SAL.

The protein belongs to the TRAFAC class translation factor GTPase superfamily. Classic translation factor GTPase family. EF-Tu/EF-1A subfamily. In terms of assembly, monomer.

The protein resides in the cytoplasm. The enzyme catalyses GTP + H2O = GDP + phosphate + H(+). Its function is as follows. GTP hydrolase that promotes the GTP-dependent binding of aminoacyl-tRNA to the A-site of ribosomes during protein biosynthesis. This is Elongation factor Tu from Shewanella putrefaciens (Pseudomonas putrefaciens).